Consider the following 128-residue polypeptide: Ribosome-binding factor A (128 aa).

It belongs to the RbfA family. Monomer. Binds 30S ribosomal subunits, but not 50S ribosomal subunits or 70S ribosomes.

The protein localises to the cytoplasm. Functionally, one of several proteins that assist in the late maturation steps of the functional core of the 30S ribosomal subunit. Associates with free 30S ribosomal subunits (but not with 30S subunits that are part of 70S ribosomes or polysomes). Required for efficient processing of 16S rRNA. May interact with the 5'-terminal helix region of 16S rRNA. This chain is Ribosome-binding factor A, found in Rippkaea orientalis (strain PCC 8801 / RF-1) (Cyanothece sp. (strain PCC 8801)).